Consider the following 273-residue polypeptide: MIIDCRSISKEIDEETLKLLTICKTKPKLVSFTINPDSGTISYLKSQQKKARSLGIEYETRVLDSVDDLKSDILNASKDSSVHGIFVSHPLPAGINEMEIAKLVDPEKDIEGRNPLNMGYLIYGKEDFAPCTATAVVRILTSVTSVTGKQVVIIGRSTTVGQPAAIMLLRRDRSATVTVCHSKTRDIPSITKKADIIIVAVGKAGFLKKDMVKEEAVVIDVGINILDGKIAGDVEQSVQEIAYLTPVPGGVGLVTTSVLMNRVAKNASRGDSN.

NADP(+)-binding positions include 155–157 (GRS), serine 182, and isoleucine 223.

The protein belongs to the tetrahydrofolate dehydrogenase/cyclohydrolase family. In terms of assembly, homodimer.

The catalysed reaction is (6R)-5,10-methylene-5,6,7,8-tetrahydrofolate + NADP(+) = (6R)-5,10-methenyltetrahydrofolate + NADPH. It carries out the reaction (6R)-5,10-methenyltetrahydrofolate + H2O = (6R)-10-formyltetrahydrofolate + H(+). Its pathway is one-carbon metabolism; tetrahydrofolate interconversion. Its function is as follows. Catalyzes the oxidation of 5,10-methylenetetrahydrofolate to 5,10-methenyltetrahydrofolate and then the hydrolysis of 5,10-methenyltetrahydrofolate to 10-formyltetrahydrofolate. The chain is Bifunctional protein FolD from Pseudothermotoga lettingae (strain ATCC BAA-301 / DSM 14385 / NBRC 107922 / TMO) (Thermotoga lettingae).